Here is a 356-residue protein sequence, read N- to C-terminus: Septin-12 (356 aa).

The tract at residues 1–23 (MDERRTPSPCSSRPSSPRTPPCE) is disordered. A compositionally biased stretch (low complexity) spans 7–16 (PSPCSSRPSS). The region spanning 44–315 (TGFEFNIMVV…ENYRVLRLNE (272 aa)) is the Septin-type G domain. The tract at residues 44–317 (TGFEFNIMVV…YRVLRLNESH (274 aa)) is interaction with SEPTIN7. The interval 54–61 (GQSGLGKS) is G1 motif. Residues 54-61 (GQSGLGKS), T87, G113, 193-201 (RADSLTIEE), G249, and R264 each bind GTP. Residues 110-113 (DTPG) form a G3 motif region. A G4 motif region spans residues 192–195 (ARAD). Positions 256–356 (VNGRCVLGRK…RSKDPRDDEC (101 aa)) are self-association (via N-terminus) to polymerize octameric septin 12-7-6-2/4-2/4-6-7-12 filaments. The disordered stretch occupies residues 330–356 (PASPGQLMAPGPEKVRKRSKDPRDDEC).

Belongs to the TRAFAC class TrmE-Era-EngA-EngB-Septin-like GTPase superfamily. Septin GTPase family. As to quaternary structure, septins polymerize into heterooligomeric protein complexes that form filaments, and can associate with cellular membranes, actin filaments and microtubules. GTPase activity is required for filament formation. Interacts with SEPTIN6 and SEPTIN11. Self-associates. Component of a octameric complex consisting of SEPTIN12, SEPTIN7, SEPTIN6 and SEPTIN2 or SEPTIN4 in the order 12-7-6-2-2-6-7-12 or 12-7-6-4-4-6-7-12 and located in the sperm annulus; the octamer polymerizes into filaments via the SEPTIN12 N- and C-termini; the SEPTIN12:SEPTIN7 association is mediated by the GTP-binding domains. Interacts with SPAG4 and LMNB1. Associates with alpha- and beta-tubulins. As to expression, predominantly expressed in testis and epididymis. Component of the sperm tail annulus (at protein level).

The protein resides in the cytoplasm. It is found in the cytoskeleton. Its subcellular location is the spindle. It localises to the cell projection. The protein localises to the cilium. The protein resides in the flagellum. Functionally, filament-forming cytoskeletal GTPase. May play a role in cytokinesis (Potential). Involved in spermatogenesis. Involved in the morphogenesis of sperm heads and the elongation of sperm tails probably implicating the association with alpha- and beta-tubulins. Forms a filamentous structure with SEPTIN7, SEPTIN6, SEPTIN2 and probably SEPTIN4 at the sperm annulus which is required for the structural integrity and motility of the sperm tail during postmeiotic differentiation. The protein is Septin-12 of Rattus norvegicus (Rat).